The following is a 285-amino-acid chain: MIICRTPEEISVQVRRWKAEDKKVGFVPTMGYLHEGHASLFRECLSKADKTVVSIFVNPAQFNDPEDYAKYPINTDGDLKICESGKVDLVFLPEKETIYPEGIPNVVLQVPHLMRNLCAVSRPGHFEGVLLVISRLFHFVKPDFAFFGKKDYQQYLLVKEFCKILAFPVEVIGCETIRSDKGLALSSRNSRLSEDEKEESLLISRALKLGEAQILSGIKDPVVVRDIMKDVLDSSPKIRLDYLEVLNADTLESLEILEGNILLAAAVFIGSVRLIDNRTLRVASV.

30–37 is an ATP binding site; the sequence is MGYLHEGH. Residue H37 is the Proton donor of the active site. Residue Q61 coordinates (R)-pantoate. Position 61 (Q61) interacts with beta-alanine. Residue 148–151 coordinates ATP; the sequence is GKKD. Position 154 (Q154) interacts with (R)-pantoate. ATP-binding positions include I177 and 185–188; that span reads LSSR.

The protein belongs to the pantothenate synthetase family. In terms of assembly, homodimer.

Its subcellular location is the cytoplasm. The catalysed reaction is (R)-pantoate + beta-alanine + ATP = (R)-pantothenate + AMP + diphosphate + H(+). It functions in the pathway cofactor biosynthesis; (R)-pantothenate biosynthesis; (R)-pantothenate from (R)-pantoate and beta-alanine: step 1/1. Catalyzes the condensation of pantoate with beta-alanine in an ATP-dependent reaction via a pantoyl-adenylate intermediate. In Leptospira borgpetersenii serovar Hardjo-bovis (strain JB197), this protein is Pantothenate synthetase.